Here is a 339-residue protein sequence, read N- to C-terminus: SVP1-like protein 2 (339 aa).

WD repeat units lie at residues 177–217 (AHAN…LVRE) and 222–261 (LDRT…ENKR).

The protein belongs to the WD repeat PROPPIN family.

Its subcellular location is the vacuole membrane. It localises to the cytoplasmic vesicle membrane. In terms of biological role, involved in mitochondrial or peroxisomal functions and amino acid signaling pathways. The polypeptide is SVP1-like protein 2 (HSV2) (Kluyveromyces lactis (strain ATCC 8585 / CBS 2359 / DSM 70799 / NBRC 1267 / NRRL Y-1140 / WM37) (Yeast)).